The primary structure comprises 1414 residues: DNA-directed RNA polymerase subunit beta' (1414 aa).

Zn(2+) contacts are provided by Cys-70, Cys-72, Cys-85, and Cys-88. 3 residues coordinate Mg(2+): Asp-460, Asp-462, and Asp-464. Positions 814, 888, 895, and 898 each coordinate Zn(2+). The segment at 1378–1414 (EREAARQLANPFEDAPVTVGGEPEAPAADTPSDDSAE) is disordered.

The protein belongs to the RNA polymerase beta' chain family. The RNAP catalytic core consists of 2 alpha, 1 beta, 1 beta' and 1 omega subunit. When a sigma factor is associated with the core the holoenzyme is formed, which can initiate transcription. Mg(2+) is required as a cofactor. The cofactor is Zn(2+).

The catalysed reaction is RNA(n) + a ribonucleoside 5'-triphosphate = RNA(n+1) + diphosphate. Its function is as follows. DNA-dependent RNA polymerase catalyzes the transcription of DNA into RNA using the four ribonucleoside triphosphates as substrates. The sequence is that of DNA-directed RNA polymerase subunit beta' from Bordetella bronchiseptica (strain ATCC BAA-588 / NCTC 13252 / RB50) (Alcaligenes bronchisepticus).